A 461-amino-acid polypeptide reads, in one-letter code: Chromosomal replication initiator protein DnaA (461 aa).

The segment at 1 to 87 is domain I, interacts with DnaA modulators; the sequence is MAVSLWQQCI…IGSRPSAKPV (87 aa). Positions 87 to 124 are domain II; that stretch reads VVQATAAVRTSRPVTREVTKPSFNTPHAEPMANANHRS. The segment at 99–125 is disordered; that stretch reads PVTREVTKPSFNTPHAEPMANANHRSN. The tract at residues 125–341 is domain III, AAA+ region; it reads NINPTYQFDN…GALNRVIANA (217 aa). The ATP site is built by glycine 169, glycine 171, lysine 172, and threonine 173. The interval 342–461 is domain IV, binds dsDNA; it reads NFTGRPITID…YANLIRTLSS (120 aa).

This sequence belongs to the DnaA family. As to quaternary structure, oligomerizes as a right-handed, spiral filament on DNA at oriC.

It is found in the cytoplasm. In terms of biological role, plays an essential role in the initiation and regulation of chromosomal replication. ATP-DnaA binds to the origin of replication (oriC) to initiate formation of the DNA replication initiation complex once per cell cycle. Binds the DnaA box (a 9 base pair repeat at the origin) and separates the double-stranded (ds)DNA. Forms a right-handed helical filament on oriC DNA; dsDNA binds to the exterior of the filament while single-stranded (ss)DNA is stabiized in the filament's interior. The ATP-DnaA-oriC complex binds and stabilizes one strand of the AT-rich DNA unwinding element (DUE), permitting loading of DNA polymerase. After initiation quickly degrades to an ADP-DnaA complex that is not apt for DNA replication. Binds acidic phospholipids. The chain is Chromosomal replication initiator protein DnaA from Shewanella pealeana (strain ATCC 700345 / ANG-SQ1).